The primary structure comprises 329 residues: GTP 3',8-cyclase (329 aa).

The Radical SAM core domain occupies 8 to 234 (VFARKFYYLR…QLRQRSDGPA (227 aa)). Arg-17 contacts GTP. Cys-24 and Cys-28 together coordinate [4Fe-4S] cluster. Tyr-30 is an S-adenosyl-L-methionine binding site. Position 31 (Cys-31) interacts with [4Fe-4S] cluster. Arg-68 contributes to the GTP binding site. Gly-72 lines the S-adenosyl-L-methionine pocket. Thr-99 provides a ligand contact to GTP. Ser-123 contacts S-adenosyl-L-methionine. Residue Lys-160 participates in GTP binding. S-adenosyl-L-methionine is bound at residue Met-194. [4Fe-4S] cluster contacts are provided by Cys-257 and Cys-260. 262 to 264 (RLR) is a binding site for GTP. Cys-274 lines the [4Fe-4S] cluster pocket.

The protein belongs to the radical SAM superfamily. MoaA family. In terms of assembly, monomer and homodimer. [4Fe-4S] cluster serves as cofactor.

The catalysed reaction is GTP + AH2 + S-adenosyl-L-methionine = (8S)-3',8-cyclo-7,8-dihydroguanosine 5'-triphosphate + 5'-deoxyadenosine + L-methionine + A + H(+). Its pathway is cofactor biosynthesis; molybdopterin biosynthesis. In terms of biological role, catalyzes the cyclization of GTP to (8S)-3',8-cyclo-7,8-dihydroguanosine 5'-triphosphate. This Shigella flexneri protein is GTP 3',8-cyclase.